The primary structure comprises 99 residues: A-type ATP synthase subunit F (99 aa).

Belongs to the V-ATPase F subunit family. Has multiple subunits with at least A(3), B(3), C, D, E, F, H, I and proteolipid K(x).

Its subcellular location is the cell membrane. Component of the A-type ATP synthase that produces ATP from ADP in the presence of a proton gradient across the membrane. In Methanococcus aeolicus (strain ATCC BAA-1280 / DSM 17508 / OCM 812 / Nankai-3), this protein is A-type ATP synthase subunit F.